We begin with the raw amino-acid sequence, 461 residues long: Glycogen synthase (461 aa).

K15 contributes to the ADP-alpha-D-glucose binding site.

This sequence belongs to the glycosyltransferase 1 family. Bacterial/plant glycogen synthase subfamily.

The catalysed reaction is [(1-&gt;4)-alpha-D-glucosyl](n) + ADP-alpha-D-glucose = [(1-&gt;4)-alpha-D-glucosyl](n+1) + ADP + H(+). The protein operates within glycan biosynthesis; glycogen biosynthesis. Its function is as follows. Synthesizes alpha-1,4-glucan chains using ADP-glucose. The sequence is that of Glycogen synthase from Fusobacterium nucleatum subsp. nucleatum (strain ATCC 25586 / DSM 15643 / BCRC 10681 / CIP 101130 / JCM 8532 / KCTC 2640 / LMG 13131 / VPI 4355).